Consider the following 450-residue polypeptide: Probable cysteine desulfurase, mitochondrial (450 aa).

The transit peptide at 1–52 (MNRSILKFVKNGIISSSSRINNNGFINKNNNNRWFATLPQPNRGIAGEKQPI) directs the protein to the mitochondrion. Pyridoxal 5'-phosphate-binding positions include 120–121 (AT), N200, Q228, and 248–250 (SGH). Residue K251 is modified to N6-(pyridoxal phosphate)lysine. Pyridoxal 5'-phosphate is bound at residue T288. C374 functions as the Cysteine persulfide intermediate in the catalytic mechanism. Residue C374 coordinates [2Fe-2S] cluster.

This sequence belongs to the class-V pyridoxal-phosphate-dependent aminotransferase family. NifS/IscS subfamily. The cofactor is pyridoxal 5'-phosphate.

It is found in the mitochondrion. Its subcellular location is the nucleus. It carries out the reaction (sulfur carrier)-H + L-cysteine = (sulfur carrier)-SH + L-alanine. Its function is as follows. Catalyzes the removal of elemental sulfur from cysteine to produce alanine. It supplies the inorganic sulfur for iron-sulfur (Fe-S) clusters. The protein is Probable cysteine desulfurase, mitochondrial (nfs1) of Dictyostelium discoideum (Social amoeba).